The following is a 437-amino-acid chain: Vacuolar cation/proton exchanger 2 (437 aa).

Positions 1 to 29 are disordered; it reads MMGAEKAEGMEELELEEGGGSPSPSPMTA. At 1 to 65 the chain is on the cytoplasmic side; it reads MMGAEKAEGM…KWRRALTSVR (65 aa). A helical membrane pass occupies residues 66–86; sequence VVILQAKINVLLPFGPLAVML. Residues 87-88 lie on the Extracellular side of the membrane; sequence HY. The chain crosses the membrane as a helical span at residues 89–109; it reads LSANHQGWVFLFSLIGITPLA. The Cytoplasmic segment spans residues 110–126; that stretch reads ERLGYATEQLALYTGPT. The helical transmembrane segment at 127–147 threads the bilayer; sequence IGGLLNATFGNATEMIISLYA. Residues 136-171 are cation selection; that stretch reads GNATEMIISLYALKNGMIRVVQQSLLGSILSNMLLV. At 148-161 the chain is on the extracellular side; it reads LKNGMIRVVQQSLL. Residues 162-182 traverse the membrane as a helical segment; the sequence is GSILSNMLLVLGCAFFAGGLV. Residues 183-194 lie on the Cytoplasmic side of the membrane; that stretch reads HPSRDQVFNKAS. Residues 195–215 traverse the membrane as a helical segment; it reads AVVNSGLLLMAVLGLMFPAVL. The Extracellular segment spans residues 216–228; it reads HFTHSEVQYGKSE. The chain crosses the membrane as a helical span at residues 229-249; the sequence is VSLSRFSSCIMLVAYASYLFF. The Cytoplasmic portion of the chain corresponds to 250–281; that stretch reads QLKSQRSLYSPIGEQEEEVTEDEEEEKEITQG. Residues 282–302 traverse the membrane as a helical segment; the sequence is EAICWLFVLTIWISILSGYLV. Over 303 to 310 the chain is Extracellular; the sequence is DAIQGASE. A helical transmembrane segment spans residues 311 to 331; sequence SLNMPVAFISVILLPIVGNAA. Residues 328 to 363 are cation selection; the sequence is GNAAEHASAIMFAMKDKLDITLGVAIGSSTQISMFV. Residues 332–352 lie on the Cytoplasmic side of the membrane; that stretch reads EHASAIMFAMKDKLDITLGVA. A helical membrane pass occupies residues 353–373; that stretch reads IGSSTQISMFVIPFCVVIGWI. Topologically, residues 374–379 are extracellular; the sequence is MGQQMD. A helical membrane pass occupies residues 380–400; sequence LNFQLFETATLFITVLVVAFM. Residues 401-408 lie on the Cytoplasmic side of the membrane; the sequence is LQEGTSNY. A helical transmembrane segment spans residues 409–429; the sequence is FKGLMLILCYLIVAASFFVHV. Topologically, residues 430-437 are extracellular; sequence DPDSSNNK.

The protein belongs to the Ca(2+):cation antiporter (CaCA) (TC 2.A.19) family. Cation/proton exchanger (CAX) subfamily. As to expression, expressed in roots and shoots.

Its subcellular location is the vacuole membrane. Functionally, vacuolar cation/proton exchanger (CAX). Translocates Ca(2+) and other metal ions into vacuoles using the proton gradient formed by H(+)-ATPase and H(+)-pyrophosphatase. The protein is Vacuolar cation/proton exchanger 2 (CAX2) of Oryza sativa subsp. japonica (Rice).